Here is a 140-residue protein sequence, read N- to C-terminus: Large ribosomal subunit protein uL11 (140 aa).

Belongs to the universal ribosomal protein uL11 family. Part of the ribosomal stalk of the 50S ribosomal subunit. Interacts with L10 and the large rRNA to form the base of the stalk. L10 forms an elongated spine to which L12 dimers bind in a sequential fashion forming a multimeric L10(L12)X complex. Post-translationally, one or more lysine residues are methylated.

Functionally, forms part of the ribosomal stalk which helps the ribosome interact with GTP-bound translation factors. This chain is Large ribosomal subunit protein uL11, found in Syntrophobacter fumaroxidans (strain DSM 10017 / MPOB).